The sequence spans 180 residues: FMN reductase (NADH) RutF (180 aa).

This sequence belongs to the non-flavoprotein flavin reductase family. RutF subfamily.

The enzyme catalyses FMNH2 + NAD(+) = FMN + NADH + 2 H(+). Functionally, catalyzes the reduction of FMN to FMNH2 which is used to reduce pyrimidine by RutA via the Rut pathway. This is FMN reductase (NADH) RutF from Variovorax paradoxus (strain S110).